The sequence spans 124 residues: Small ribosomal subunit protein uS12 (124 aa).

Residue aspartate 89 is modified to 3-methylthioaspartic acid.

The protein belongs to the universal ribosomal protein uS12 family. In terms of assembly, part of the 30S ribosomal subunit. Contacts proteins S8 and S17. May interact with IF1 in the 30S initiation complex.

In terms of biological role, with S4 and S5 plays an important role in translational accuracy. Interacts with and stabilizes bases of the 16S rRNA that are involved in tRNA selection in the A site and with the mRNA backbone. Located at the interface of the 30S and 50S subunits, it traverses the body of the 30S subunit contacting proteins on the other side and probably holding the rRNA structure together. The combined cluster of proteins S8, S12 and S17 appears to hold together the shoulder and platform of the 30S subunit. This chain is Small ribosomal subunit protein uS12, found in Haemophilus ducreyi (strain 35000HP / ATCC 700724).